Reading from the N-terminus, the 233-residue chain is Octanoyltransferase (233 aa).

Residues 36-211 (DTTPDEIWLV…EFTRQLGYPT (176 aa)) form the BPL/LPL catalytic domain. Substrate contacts are provided by residues 75-82 (RGGQITYH), 142-144 (SLG), and 155-157 (GLA). Catalysis depends on C173, which acts as the Acyl-thioester intermediate.

Belongs to the LipB family.

It localises to the cytoplasm. The enzyme catalyses octanoyl-[ACP] + L-lysyl-[protein] = N(6)-octanoyl-L-lysyl-[protein] + holo-[ACP] + H(+). The protein operates within protein modification; protein lipoylation via endogenous pathway; protein N(6)-(lipoyl)lysine from octanoyl-[acyl-carrier-protein]: step 1/2. In terms of biological role, catalyzes the transfer of endogenously produced octanoic acid from octanoyl-acyl-carrier-protein onto the lipoyl domains of lipoate-dependent enzymes. Lipoyl-ACP can also act as a substrate although octanoyl-ACP is likely to be the physiological substrate. The chain is Octanoyltransferase from Yersinia pseudotuberculosis serotype O:1b (strain IP 31758).